The following is a 261-amino-acid chain: 5'-nucleotidase SurE (261 aa).

The a divalent metal cation site is built by aspartate 8, aspartate 9, serine 43, and asparagine 96.

It belongs to the SurE nucleotidase family. A divalent metal cation is required as a cofactor.

Its subcellular location is the cytoplasm. The catalysed reaction is a ribonucleoside 5'-phosphate + H2O = a ribonucleoside + phosphate. Functionally, nucleotidase that shows phosphatase activity on nucleoside 5'-monophosphates. The protein is 5'-nucleotidase SurE of Cereibacter sphaeroides (strain ATCC 17023 / DSM 158 / JCM 6121 / CCUG 31486 / LMG 2827 / NBRC 12203 / NCIMB 8253 / ATH 2.4.1.) (Rhodobacter sphaeroides).